The chain runs to 347 residues: GMP reductase (347 aa).

Position 108–131 (108–131 (ADFQKTKDIMALTDDLIFICIDIA)) interacts with NADP(+). Residues Gly-181 and Gly-183 each contribute to the K(+) site. Catalysis depends on Cys-186, which acts as the Thioimidate intermediate. NADP(+) is bound at residue 216-239 (IIGDGGCSCAGDVSKAFGGGADFV).

It belongs to the IMPDH/GMPR family. GuaC type 1 subfamily. As to quaternary structure, homotetramer.

It catalyses the reaction IMP + NH4(+) + NADP(+) = GMP + NADPH + 2 H(+). Functionally, catalyzes the irreversible NADPH-dependent deamination of GMP to IMP. It functions in the conversion of nucleobase, nucleoside and nucleotide derivatives of G to A nucleotides, and in maintaining the intracellular balance of A and G nucleotides. The chain is GMP reductase from Aliivibrio fischeri (strain MJ11) (Vibrio fischeri).